We begin with the raw amino-acid sequence, 331 residues long: Pectate lyase B (331 aa).

Residues 1 to 25 form the signal peptide; that stretch reads MKFTGSPLLWPSWLPLPAPPPPLPS. Asparagine 99 carries an N-linked (GlcNAc...) asparagine glycan. 3 residues coordinate Ca(2+): aspartate 139, aspartate 169, and aspartate 173. Arginine 226 is a catalytic residue.

The protein belongs to the polysaccharide lyase 1 family. Ca(2+) is required as a cofactor.

The protein resides in the secreted. The enzyme catalyses Eliminative cleavage of (1-&gt;4)-alpha-D-galacturonan to give oligosaccharides with 4-deoxy-alpha-D-galact-4-enuronosyl groups at their non-reducing ends.. It participates in glycan metabolism; pectin degradation; 2-dehydro-3-deoxy-D-gluconate from pectin: step 2/5. In terms of biological role, acts as a virulence factor active in plant tissue maceration. The polypeptide is Pectate lyase B (PLB) (Colletotrichum gloeosporioides (Anthracnose fungus)).